Here is a 465-residue protein sequence, read N- to C-terminus: Ribulose bisphosphate carboxylase large chain (465 aa).

Position 4 is an N6,N6,N6-trimethyllysine (Lys4). Asn113 and Thr163 together coordinate substrate. Lys165 (proton acceptor) is an active-site residue. A substrate-binding site is contributed by Lys167. The Mg(2+) site is built by Lys191, Asp193, and Glu194. An N6-carboxylysine modification is found at Lys191. His284 functions as the Proton acceptor in the catalytic mechanism. Substrate is bound by residues Arg285, His317, and Ser369.

This sequence belongs to the RuBisCO large chain family. Type I subfamily. In terms of assembly, heterohexadecamer of 8 large chains and 8 small chains; disulfide-linked. The disulfide link is formed within the large subunit homodimers. Requires Mg(2+) as cofactor. The disulfide bond which can form in the large chain dimeric partners within the hexadecamer appears to be associated with oxidative stress and protein turnover.

The protein resides in the plastid. It localises to the chloroplast. The enzyme catalyses 2 (2R)-3-phosphoglycerate + 2 H(+) = D-ribulose 1,5-bisphosphate + CO2 + H2O. It carries out the reaction D-ribulose 1,5-bisphosphate + O2 = 2-phosphoglycolate + (2R)-3-phosphoglycerate + 2 H(+). In terms of biological role, ruBisCO catalyzes two reactions: the carboxylation of D-ribulose 1,5-bisphosphate, the primary event in carbon dioxide fixation, as well as the oxidative fragmentation of the pentose substrate in the photorespiration process. Both reactions occur simultaneously and in competition at the same active site. In Byrsonima crassifolia (Cajuil cimarron), this protein is Ribulose bisphosphate carboxylase large chain.